The following is a 591-amino-acid chain: ATP-dependent RNA helicase DDX55 (591 aa).

Positions 9 to 37 match the Q motif motif; the sequence is WSSLPVALSPGVLRALQDLGFDRMTPVQS. In terms of domain architecture, Helicase ATP-binding spans 40-223; it reads IPLFMSNKDV…RAGLRNPVRI (184 aa). An ATP-binding site is contributed by 53-60; sequence AVTGSGKT. A DEAD box motif is present at residues 171-174; sequence DEAD. The Helicase C-terminal domain maps to 254–402; the sequence is KFNQLVHFLR…EMQPQRNVLD (149 aa). Disordered regions lie at residues 482–559 and 571–591; these read DSIP…NDTR and EEEF…AAAD. Basic and acidic residues predominate over residues 485–513; the sequence is PFKDKNREKQRQKQLEQQRKEREESEGKK. The stretch at 486 to 542 forms a coiled coil; sequence FKDKNREKQRQKQLEQQRKEREESEGKKKFIKNKSWSKQKAKREKKRKLTAKRKREE. A compositionally biased stretch (basic residues) spans 514–538; sequence KFIKNKSWSKQKAKREKKRKLTAKR. An important for nuclear localization region spans residues 533–562; the sequence is KLTAKRKREEGSDMEDEDMEELLNDTRLLK. The segment covering 544 to 555 has biased composition (acidic residues); the sequence is SDMEDEDMEELL.

It belongs to the DEAD box helicase family. DDX55/SPB4 subfamily. In terms of assembly, interacts with 28S rRNA. Interacts with double-stranded RNA substrates in vitro; the interaction stimulates ATPase activity.

It is found in the nucleus. The protein resides in the nucleoplasm. It carries out the reaction ATP + H2O = ADP + phosphate + H(+). Probable ATP-binding RNA helicase. Has ATPase activity and is involved in the maturation of precursor large subunit rRNAs. In Gallus gallus (Chicken), this protein is ATP-dependent RNA helicase DDX55 (DDX55).